The sequence spans 284 residues: 2-dehydro-3-deoxyphosphooctonate aldolase (284 aa).

The protein belongs to the KdsA family.

The protein localises to the cytoplasm. The enzyme catalyses D-arabinose 5-phosphate + phosphoenolpyruvate + H2O = 3-deoxy-alpha-D-manno-2-octulosonate-8-phosphate + phosphate. Its pathway is carbohydrate biosynthesis; 3-deoxy-D-manno-octulosonate biosynthesis; 3-deoxy-D-manno-octulosonate from D-ribulose 5-phosphate: step 2/3. It functions in the pathway bacterial outer membrane biogenesis; lipopolysaccharide biosynthesis. This Escherichia fergusonii (strain ATCC 35469 / DSM 13698 / CCUG 18766 / IAM 14443 / JCM 21226 / LMG 7866 / NBRC 102419 / NCTC 12128 / CDC 0568-73) protein is 2-dehydro-3-deoxyphosphooctonate aldolase.